The chain runs to 815 residues: Protein-glutamine gamma-glutamyltransferase K (815 aa).

The segment covering 1–10 (MEGPRSDVGR) has biased composition (basic and acidic residues). 2 disordered regions span residues 1 to 48 (MEGP…SFWA) and 62 to 101 (DDWGPEPSGSRSRGTSSRGRDSRGGRRPESRGSGVNAAGD). The span at 16-25 (WQPPTTPSPE) shows a compositional bias: pro residues. Threonine 21 carries the phosphothreonine modification. 5 positions are modified to phosphoserine: serine 23, serine 71, serine 83, serine 91, and serine 94. Low complexity predominate over residues 66–78 (PEPSGSRSRGTSS). Positions 79–91 (RGRDSRGGRRPES) are enriched in basic and acidic residues. Active-site residues include cysteine 376, histidine 435, and aspartate 458. Asparagine 498, aspartate 500, glutamate 547, and glutamate 552 together coordinate Ca(2+). The disordered stretch occupies residues 791–815 (GSGFSDAGGDSRSGENIPMAYRGGA). Residue serine 803 is modified to Phosphoserine.

The protein belongs to the transglutaminase superfamily. Transglutaminase family. As to quaternary structure, interacts with PLAAT4. Ca(2+) is required as a cofactor. Post-translationally, tyrosine-phosphorylated. In terms of processing, palmitoylated. The membrane anchorage region possesses a cluster of five cysteines within which fatty acid(s) may become thioester-linked. It is subject to phorbol ester-stimulated phosphorylation and is hypersensitive to proteolysis, which releases the enzyme in a soluble form. Expressed in large amounts in epithelial tissues (lung, liver and kidney).

It is found in the membrane. The catalysed reaction is L-glutaminyl-[protein] + L-lysyl-[protein] = [protein]-L-lysyl-N(6)-5-L-glutamyl-[protein] + NH4(+). In terms of biological role, catalyzes the cross-linking of proteins and the conjugation of polyamines to proteins. Responsible for cross-linking epidermal proteins during formation of the stratum corneum. Involved in cell proliferation. The chain is Protein-glutamine gamma-glutamyltransferase K (Tgm1) from Mus musculus (Mouse).